Reading from the N-terminus, the 1855-residue chain is Collagen alpha-1(XXVII) chain (1855 aa).

A signal peptide spans 1–48 (MGLARATAGLGPCCPPAPALLGAGLRWGGFLFAWILVSFSCHLASTQG). A propeptide spans 49–618 (APEDVDVLQR…PEPTPFLMLM (570 aa)) (N-terminal propeptide). Positions 81-246 (PSGFIFTQRA…NYCAHLRERC (166 aa)) constitute a Laminin G-like domain. N-linked (GlcNAc...) asparagine glycans are attached at residues Asn-281 and Asn-349. Disordered regions lie at residues 317–428 (DVSK…SATV), 511–580 (PPLG…SQLS), 617–787 (LMGP…GFPG), and 838–1617 (GGVG…HPVQ). Composition is skewed to polar residues over residues 382–427 (LSVT…SSAT) and 520–532 (MMPS…STPA). Residues 563-573 (TARDASPRDLT) are compositionally biased toward basic and acidic residues. 13 consecutive Collagen-like domains span residues 619-673 (GPPG…GDPG), 682-741 (GAKG…PGPV), 751-810 (GYIG…PGPP), 826-885 (GYPG…PGPM), 886-945 (GKAG…EGPM), 946-1005 (GPPG…VGEK), 1006-1047 (GDRG…PGSR), 1048-1105 (GLPG…GAKG), 1108-1155 (GIPG…PGLP), 1156-1215 (GDSG…KGQE), 1216-1275 (GLKG…PGTP), 1276-1330 (GPKG…GEDG), and 1334-1393 (GAPG…KGSK). Positions 619 to 1612 (GPPGSKGDCG…RGRPGPPGPP (994 aa)) are triple-helical region. Pro residues predominate over residues 630–663 (PGPPGLPGLPGSPGPRGPRGPPGPFGNPGLPGPP). The span at 708–728 (PGAAGHPGEQGQPGPEGSPGA) shows a compositional bias: low complexity. Residues 905–918 (FPGDIGPPGDNGPE) show a composition bias toward low complexity. The segment covering 1027–1036 (GTPGGVGDPG) has biased composition (gly residues). 3 stretches are compositionally biased toward low complexity: residues 1083–1095 (RGRP…QGAA), 1121–1131 (LPGEPGSQGPQ), and 1161–1176 (KGDL…QGLI). Composition is skewed to basic and acidic residues over residues 1196-1221 (LKGD…KGEE), 1320-1332 (KGEK…DGKT), and 1344-1354 (PVGDRGDRGEP). Low complexity-rich tracts occupy residues 1369-1378 (RGEPGQQGQP) and 1404-1431 (KAGA…RQGP). Collagen-like domains lie at 1433–1492 (GMAG…SGLP), 1493–1552 (GQLG…KGIQ), and 1553–1612 (GPRG…PGPP). Residues 1566–1581 (IIGPPGMLGPSGLPGP) are compositionally biased toward low complexity. A compositionally biased stretch (pro residues) spans 1597-1614 (RGPPGPRGRPGPPGPPWH). Residues 1616-1855 (VQFQQDDLEA…RLEVGPACFL (240 aa)) constitute a propeptide, C-terminal propeptide. Positions 1655–1855 (GEIFKTLHYL…RLEVGPACFL (201 aa)) constitute a Fibrillar collagen NC1 domain. Disulfide bonds link Cys-1685–Cys-1717, Cys-1726–Cys-1853, and Cys-1762–Cys-1806. Residues Asp-1703, Asn-1705, Cys-1708, and Asp-1711 each contribute to the Ca(2+) site. Asn-1764 is a glycosylation site (N-linked (GlcNAc...) asparagine).

It belongs to the fibrillar collagen family.

It localises to the secreted. The protein resides in the extracellular space. Its subcellular location is the extracellular matrix. Plays a role during the calcification of cartilage and the transition of cartilage to bone. The sequence is that of Collagen alpha-1(XXVII) chain (Col27a1) from Rattus norvegicus (Rat).